A 158-amino-acid polypeptide reads, in one-letter code: 2-C-methyl-D-erythritol 2,4-cyclodiphosphate synthase (158 aa).

Residues aspartate 9 and histidine 11 each contribute to the a divalent metal cation site. 4-CDP-2-C-methyl-D-erythritol 2-phosphate contacts are provided by residues 9–11 and 35–36; these read DVH and HS. Histidine 43 serves as a coordination point for a divalent metal cation. Residues 57–59, 62–66, 133–136, phenylalanine 140, and arginine 143 contribute to the 4-CDP-2-C-methyl-D-erythritol 2-phosphate site; these read DIG, FPDTD, and TTTE.

It belongs to the IspF family. As to quaternary structure, homotrimer. Requires a divalent metal cation as cofactor.

The enzyme catalyses 4-CDP-2-C-methyl-D-erythritol 2-phosphate = 2-C-methyl-D-erythritol 2,4-cyclic diphosphate + CMP. It participates in isoprenoid biosynthesis; isopentenyl diphosphate biosynthesis via DXP pathway; isopentenyl diphosphate from 1-deoxy-D-xylulose 5-phosphate: step 4/6. Involved in the biosynthesis of isopentenyl diphosphate (IPP) and dimethylallyl diphosphate (DMAPP), two major building blocks of isoprenoid compounds. Catalyzes the conversion of 4-diphosphocytidyl-2-C-methyl-D-erythritol 2-phosphate (CDP-ME2P) to 2-C-methyl-D-erythritol 2,4-cyclodiphosphate (ME-CPP) with a corresponding release of cytidine 5-monophosphate (CMP). This is 2-C-methyl-D-erythritol 2,4-cyclodiphosphate synthase from Actinobacillus pleuropneumoniae serotype 5b (strain L20).